The following is a 329-amino-acid chain: Prostaglandin reductase 1 (329 aa).

Thr-18 bears the Phosphothreonine mark. Ser-20 carries the phosphoserine modification. NADP(+) contacts are provided by residues 152 to 155, Lys-178, Tyr-193, Asn-217, 239 to 245, 270 to 272, and Asn-321; these read GAVG, CGAISVY, and FVV. Lys-178 is modified (N6-(2-hydroxyisobutyryl)lysine; alternate). Lys-178 is modified (N6-acetyllysine; alternate).

It belongs to the NADP-dependent oxidoreductase L4BD family. In terms of assembly, monomer or homodimer.

It localises to the cytoplasm. The catalysed reaction is 13,14-dihydro-15-oxo-prostaglandin E1 + NADP(+) = 15-oxoprostaglandin E1 + NADPH + H(+). It carries out the reaction 13,14-dihydro-15-oxo-prostaglandin E2 + NADP(+) = 15-oxoprostaglandin E2 + NADPH + H(+). It catalyses the reaction 13,14-dihydro-15-oxo-prostaglandin F1alpha + NADP(+) = 15-oxoprostaglandin F1alpha + NADPH + H(+). The enzyme catalyses 13,14-dihydro-15-oxo-PGF2alpha + NADP(+) = 15-oxoprostaglandin F2alpha + NADPH + H(+). The catalysed reaction is leukotriene B4 + NADP(+) = 12-oxo-leukotriene B4 + NADPH + H(+). It carries out the reaction 20-hydroxy-leukotriene B4 + NADP(+) = 12-oxo-20-hydroxy-leukotriene B4 + NADPH + H(+). It catalyses the reaction 6-trans-leukotriene B4 + NADP(+) = 12-oxo-(5S)-hydroxy-(6E,8E,10E,14Z)-eicosatetraenoate + NADPH + H(+). The enzyme catalyses (5S,12S)-dihydroxy-(6E,10E,12E,14Z)-eicosatetraenoate + NADP(+) = 12-oxo-(5S)-hydroxy-(6E,8E,10E,14Z)-eicosatetraenoate + NADPH + H(+). The catalysed reaction is an n-alkanal + NADP(+) = an alk-2-enal + NADPH + H(+). It carries out the reaction hexanal + NADP(+) = (E)-hex-2-enal + NADPH + H(+). It catalyses the reaction octanal + NADP(+) = (2E)-octenal + NADPH + H(+). The enzyme catalyses decanal + NADP(+) = (2E)-decenal + NADPH + H(+). The catalysed reaction is dodecanal + NADP(+) = (2E)-dodecenal + NADPH + H(+). It carries out the reaction 4-hydroxynonanal + NADP(+) = (E)-4-hydroxynon-2-enal + NADPH + H(+). It catalyses the reaction pentan-2-one + NADP(+) = (E)-pent-3-en-2-one + NADPH + H(+). The enzyme catalyses nonan-2-one + NADP(+) = (3E)-nonen-2-one + NADPH + H(+). Functionally, NAD(P)H-dependent oxidoreductase involved in metabolic inactivation of pro- and anti-inflammatory eicosanoids: prostaglandins (PG), leukotrienes (LT) and lipoxins (LX). Catalyzes with high efficiency the reduction of the 13,14 double bond of 15-oxoPGs, including 15-oxo-PGE1, 15-oxo-PGE2, 15-oxo-PGF1-alpha and 15-oxo-PGF2-alpha. Catalyzes with lower efficiency the oxidation of the hydroxyl group at C12 of LTB4 and its derivatives, converting them into biologically less active 12-oxo-LTB4 metabolites. Reduces 15-oxo-LXA4 to 13,14 dihydro-15-oxo-LXA4, enhancing neutrophil recruitment at the inflammatory site. Plays a role in metabolic detoxification of alkenals and ketones. Reduces alpha,beta-unsaturated alkenals and ketones, particularly those with medium-chain length, showing highest affinity toward (2E)-decenal and (3E)-3-nonen-2-one. May inactivate 4-hydroxy-2-nonenal, a cytotoxic lipid constituent of oxidized low-density lipoprotein particles. The sequence is that of Prostaglandin reductase 1 (PTGR1) from Bos taurus (Bovine).